The following is a 261-amino-acid chain: Protein OSB1, mitochondrial (261 aa).

A mitochondrion-targeting transit peptide spans 1 to 28; it reads MNTFFKLGSLIQRTASQISSSFPKSRFF. The region spanning 55 to 155 is the SSB domain; that stretch reads VNSVSLMGFV…VKVAEVNYVA (101 aa). The segment at 189 to 238 is PDF region; sequence WQVFFSNPYDWWDNRRNKKNPKQPDFKHKDTGEALWLCSDLPDWITRRLE.

As to expression, expressed in root elongation zone and in gametophytic cells.

It is found in the mitochondrion. Regulates mitochondrial DNA recombination. Represses homologous recombination, preventing mitochondrial genome instability and unbalanced transmission of alternative mtDNA configurations. Binds preferentially single-stranded DNA. Does not bind to RNA. This Arabidopsis thaliana (Mouse-ear cress) protein is Protein OSB1, mitochondrial (OSB1).